We begin with the raw amino-acid sequence, 380 residues long: Cytochrome b (380 aa).

4 consecutive transmembrane segments (helical) span residues 33–53 (FGSLLGLCLIAQILTGLFLAM), 77–98 (WLIRNLHANGASFFFICLYLHV), 113–133 (WNIGVVLLLLVMMTAFVGYVL), and 178–198 (FFAFHFLFPFIIAAMVLLHLL). Heme b is bound by residues His83 and His97. Residues His182 and His196 each coordinate heme b. His201 contributes to the a ubiquinone binding site. 4 helical membrane passes run 226–246 (YKDLFGFVILLLALSILTLFS), 288–308 (LGGVLALLASILILMVVPLLH), 320–340 (LTQILFWTLVADVAILTWIGG), and 347–367 (FITVGQVASVLYFALFLILIP).

It belongs to the cytochrome b family. In terms of assembly, the cytochrome bc1 complex contains 3 respiratory subunits (MT-CYB, CYC1 and UQCRFS1), 2 core proteins (UQCRC1 and UQCRC2) and probably 6 low-molecular weight proteins. Heme b is required as a cofactor.

The protein localises to the mitochondrion inner membrane. Component of the ubiquinol-cytochrome c reductase complex (complex III or cytochrome b-c1 complex) that is part of the mitochondrial respiratory chain. The b-c1 complex mediates electron transfer from ubiquinol to cytochrome c. Contributes to the generation of a proton gradient across the mitochondrial membrane that is then used for ATP synthesis. The polypeptide is Cytochrome b (mt-cyb) (Allocyttus niger (Black oreo dory)).